Consider the following 352-residue polypeptide: Invasion chromosome antigen T (352 aa).

This sequence belongs to the IcaT/YfdF family.

The protein localises to the secreted. In terms of biological role, may contribute to pathogenesis, although some of its characteristics suggest it is a fossil gene. The chain is Invasion chromosome antigen T from Shigella flexneri serotype 5a (strain M90T).